We begin with the raw amino-acid sequence, 214 residues long: Anti-sigma-F factor NrsF (214 aa).

Residues 1 to 25 (MRTDDLIDALAADAGRGTEPAPPRR) are Cytoplasmic-facing. The helical transmembrane segment at 26–46 (LALVAGLGGVAALLLVLGWLQ) threads the bilayer. Residues 47-53 (ARPDLGQ) lie on the Periplasmic side of the membrane. A helical transmembrane segment spans residues 54 to 74 (AILGPMFWVKAIYTGLLGLAG). Residues 75 to 90 (YLAVERLSRPGGSGRR) are Cytoplasmic-facing. The chain crosses the membrane as a helical span at residues 91–111 (GWIIGAVVFGACAVAGIYQAI). Over 112-134 (TSPDVQAALKLLHGYSWRSCSPR) the chain is Periplasmic. The chain crosses the membrane as a helical span at residues 135–155 (ILVLGLPMLALGLWALRGMAP). Topologically, residues 156–158 (TRP) are cytoplasmic. A helical membrane pass occupies residues 159–179 (GLAGFAMGLFSGGVVATLYGL). Topologically, residues 180-185 (HCPEHT) are periplasmic. The chain crosses the membrane as a helical span at residues 186–206 (FTFLALWYSLGVLALGLIGGW). Topologically, residues 207–214 (AGRWLLRW) are cytoplasmic.

It belongs to the NrsF anti-sigma-F factor family.

It is found in the cell inner membrane. Functionally, an anti-sigma factor for extracytoplasmic function (ECF) sigma factor sigma-F (SigF), which responds to chromate and cadmium. Overexpression leads to loss of response to dichromate. ECF sigma factors are held in an inactive form by a cognate anti-sigma factor. This Caulobacter vibrioides (strain NA1000 / CB15N) (Caulobacter crescentus) protein is Anti-sigma-F factor NrsF.